The primary structure comprises 650 residues: DNA gyrase subunit B (650 aa).

The 115-residue stretch at 429-543 (NELFIVEGDS…AGYVYIAQPP (115 aa)) folds into the Toprim domain. Mg(2+) contacts are provided by Glu435, Asp508, and Asp510.

Belongs to the type II topoisomerase GyrB family. Heterotetramer, composed of two GyrA and two GyrB chains. In the heterotetramer, GyrA contains the active site tyrosine that forms a transient covalent intermediate with DNA, while GyrB binds cofactors and catalyzes ATP hydrolysis. Mg(2+) is required as a cofactor. Requires Mn(2+) as cofactor. The cofactor is Ca(2+).

It localises to the cytoplasm. The enzyme catalyses ATP-dependent breakage, passage and rejoining of double-stranded DNA.. In terms of biological role, a type II topoisomerase that negatively supercoils closed circular double-stranded (ds) DNA in an ATP-dependent manner to modulate DNA topology and maintain chromosomes in an underwound state. Negative supercoiling favors strand separation, and DNA replication, transcription, recombination and repair, all of which involve strand separation. Also able to catalyze the interconversion of other topological isomers of dsDNA rings, including catenanes and knotted rings. Type II topoisomerases break and join 2 DNA strands simultaneously in an ATP-dependent manner. The sequence is that of DNA gyrase subunit B from Streptococcus pyogenes serotype M3 (strain ATCC BAA-595 / MGAS315).